A 256-amino-acid chain; its full sequence is Matrix protein (256 aa).

An interaction with M2-1 region spans residues 1–110 (METYVNKLHE…KLAYDVTTPC (110 aa)). The tract at residues 110-183 (CEIKACSLTC…LNSLENIATT (74 aa)) is nuclear targeting and binding to host importin KPNB1. A Nuclear export signal motif is present at residues 194–206 (IIPYAGLVLVITV). Phosphothreonine is present on threonine 205.

This sequence belongs to the pneumovirinae M protein family. As to quaternary structure, forms dimers. Forms higher-order oligomers. Interacts with glycoprotein G (via N-terminus). Interacts with protein M2-1; this interaction directs the matrix protein localization to cytoplasmic inclusions comprising viral proteins L, N, P, and M2-1 and mediates the matrix protein association with the nucleocapsid. Interacts with host KPNB1; this interaction mediates nuclear import of the matrix protein early during infection. Interacts with host AP3M1; this interaction plays an essential role in trafficking the matrix protein in host cells. Interacts with host CAV1; this interaction probably facilitates viral budding. Interacts with host CFL1; this interaction probably facilitates viral replication. Interacts with host ZNF502; this interaction probably facilitates viral release. Post-translationally, phosphorylation is important for oligomerization.

The protein resides in the virion. It localises to the host cytoplasm. Its subcellular location is the host nucleus. The protein localises to the host cell membrane. In terms of biological role, plays a crucial role in virus assembly into filaments and budding. Early in infection, localizes in the nucleus where it inhibits host cell transcription through direct binding to host chromatin. Later in infection, traffics to the cytoplasm through the action of host CRM1 to associate with inclusion bodies, the site of viral transcription and replication. During virus assembly and budding, acts as a bridge between the nucleocapsid and the lipid bilayer. The polypeptide is Matrix protein (M) (Human respiratory syncytial virus B (strain B1)).